The primary structure comprises 305 residues: Pseudouridine-5'-phosphate glycosidase (305 aa).

Residue Glu-22 is the Proton donor of the active site. Lys-84 and Val-104 together coordinate substrate. Residue Asp-136 participates in Mn(2+) binding. 138–140 (SAD) lines the substrate pocket. Lys-157 (nucleophile) is an active-site residue.

It belongs to the pseudouridine-5'-phosphate glycosidase family. As to quaternary structure, homotrimer. Mn(2+) is required as a cofactor.

The catalysed reaction is D-ribose 5-phosphate + uracil = psi-UMP + H2O. In terms of biological role, catalyzes the reversible cleavage of pseudouridine 5'-phosphate (PsiMP) to ribose 5-phosphate and uracil. Functions biologically in the cleavage direction, as part of a pseudouridine degradation pathway. This is Pseudouridine-5'-phosphate glycosidase from Chloroflexus aurantiacus (strain ATCC 29364 / DSM 637 / Y-400-fl).